Consider the following 155-residue polypeptide: Peptide deformylase 2 (155 aa).

2 residues coordinate Fe cation: cysteine 90 and histidine 132. Residue glutamate 133 is part of the active site. Position 136 (histidine 136) interacts with Fe cation.

Belongs to the polypeptide deformylase family. Fe(2+) is required as a cofactor.

It catalyses the reaction N-terminal N-formyl-L-methionyl-[peptide] + H2O = N-terminal L-methionyl-[peptide] + formate. Removes the formyl group from the N-terminal Met of newly synthesized proteins. Requires at least a dipeptide for an efficient rate of reaction. N-terminal L-methionine is a prerequisite for activity but the enzyme has broad specificity at other positions. This chain is Peptide deformylase 2, found in Clostridium perfringens (strain 13 / Type A).